Reading from the N-terminus, the 776-residue chain is U3 small nucleolar RNA-associated protein 4 (776 aa).

WD repeat units lie at residues 35-40 (RCRFVD), 132-169 (LPLR…VLID), 178-214 (EHDT…RIWS), 230-266 (KVDK…KFWD), 271-308 (TLNQ…FQFS), and 417-452 (VCKL…KVFH).

In terms of assembly, interacts with snoRNA U3. Interacts with MPP10. Component of the ribosomal small subunit (SSU) processome composed of at least 40 protein subunits and snoRNA U3. In the absence of snoRNA3, forms a complex with other t-UTPs. This complex can associate with pre-18S ribosomal RNAs.

It is found in the nucleus. It localises to the nucleolus. Its function is as follows. Involved in nucleolar processing of pre-18S ribosomal RNA. Required for optimal pre-ribosomal RNA transcription by RNA polymerase I together with a subset of U3 proteins required for transcription (t-UTPs). This is U3 small nucleolar RNA-associated protein 4 (UTP4) from Saccharomyces cerevisiae (strain ATCC 204508 / S288c) (Baker's yeast).